A 409-amino-acid polypeptide reads, in one-letter code: 8-amino-7-oxononanoate synthase (409 aa).

Arg20 provides a ligand contact to substrate. Residue 116–117 (GY) participates in pyridoxal 5'-phosphate binding. Residue His141 participates in substrate binding. Ser187, His215, and Thr243 together coordinate pyridoxal 5'-phosphate. Residue Lys246 is modified to N6-(pyridoxal phosphate)lysine. A substrate-binding site is contributed by Thr369.

Belongs to the class-II pyridoxal-phosphate-dependent aminotransferase family. BioF subfamily. Homodimer. Pyridoxal 5'-phosphate serves as cofactor.

The enzyme catalyses 6-carboxyhexanoyl-[ACP] + L-alanine + H(+) = (8S)-8-amino-7-oxononanoate + holo-[ACP] + CO2. It functions in the pathway cofactor biosynthesis; biotin biosynthesis. In terms of biological role, catalyzes the decarboxylative condensation of pimeloyl-[acyl-carrier protein] and L-alanine to produce 8-amino-7-oxononanoate (AON), [acyl-carrier protein], and carbon dioxide. This is 8-amino-7-oxononanoate synthase from Polaromonas naphthalenivorans (strain CJ2).